The following is a 911-amino-acid chain: MDTCGVGYVALGEAGPVGNMTVVDSPGQEVLNQLDVKTSSEMTSAEASVEMSLPTPLPGFEDSPDQRRLPPEQESLSRLEQPDLSSEMSKVSKPRASKPGRKRGGRTRKGPKRPQQPNPPSAPLVPGLLDQSNPLSTPMPKKRGRKSKAELLLLKLSKDLDRPESQSPKRPPEDFETPSGERPRRRAAQVALLYLQELAEELSTALPAPVSCPEGPKVSSPTKPKKIRQPAACPGGEEVDGAPRDEDFFLQVEAEDVEESEGPSESSSEPEPVVPRSTPRGSTSGKQKPHCRGMAPNGLPNHIMAPVWKCLHLTKDFREQKHSYWEFAEWIPLAWKWHLLSELEAAPYLPQEEKSPLFSVQREGLPEDGTLYRINRFSSITAHPERWDVSFFTGGPLWALDWCPVPEGAGASQYVALFSSPDMNETHPLSQLHSGPGLLQLWGLGTLQQESCPGNRAHFVYGIACDNGCIWDLKFCPSGAWELPGTPRKAPLLPRLGLLALACSDGKVLLFSLPHPEALLAQQPPDAVKPAIYKVQCVATLQVGSMQATDPSECGQCLSLAWMPTRPHQHLAAGYYNGMVVFWNLPTNSPLQRIRLSDGSLKLYPFQCFLAHDQAVRTLQWCKANSHFLVSAGSDRKIKFWDLRRPYEPINSIKRFLSTELAWLLPYNGVTVAQDNCYASYGLCGIHYIDAGYLGFKAYFTAPRKGTVWSLSGSDWLGTIAAGDISGELIAAILPDMALNPINVKRPVERRFPIYKADLIPYQDSPEGPDHSSASSGVPNPPKARTYTETVNHHYLLFQDTDLGSFHDLLRREPMLRMQEGEGHSQLCLDRLQLEAIHKVRFSPNLDSYGWLVSGGQSGLVRIHFVRGLASPLGHRMQLESRAHFNAMFQPSSPTRRPGFSPTSHRLLPTP.

Disordered regions lie at residues 24-187 and 205-297; these read DSPG…RRRA and ALPA…MAPN. The span at 35–46 shows a compositional bias: polar residues; the sequence is DVKTSSEMTSAE. Serine 63 carries the post-translational modification Phosphoserine. Residues 64–81 are compositionally biased toward basic and acidic residues; the sequence is PDQRRLPPEQESLSRLEQ. The span at 92-112 shows a compositional bias: basic residues; sequence SKPRASKPGRKRGGRTRKGPK. Positions 114 to 123 are enriched in pro residues; sequence PQQPNPPSAP. Residues serine 132, serine 165, serine 167, serine 220, and serine 260 each carry the phosphoserine modification. A compositionally biased stretch (acidic residues) spans 253–262; the sequence is EAEDVEESEG. The span at 263–277 shows a compositional bias: low complexity; that stretch reads PSESSSEPEPVVPRS. 6 WD repeats span residues 366–426, 427–483, 484–535, 536–603, 604–654, and 655–690; these read PEDG…MNET, HPLS…AWEL, PGTP…IYKV, QCVA…SLKL, YPFQ…NSIK, and RFLS…HYID. Serine 597 bears the Phosphoserine mark. The segment at 765–785 is disordered; the sequence is SPEGPDHSSASSGVPNPPKAR. A phosphoserine mark is found at serine 871, serine 892, and serine 893. Residues 889–911 form a disordered region; the sequence is FQPSSPTRRPGFSPTSHRLLPTP. The residue at position 895 (threonine 895) is a Phosphothreonine. Serine 901 bears the Phosphoserine mark.

As to quaternary structure, part of the TFIIIC subcomplex TFIIIC2, consisting of six subunits, GTF3C1, GTF3C2, GTF3C3, GTF3C4, GTF3C5 and GTF3C6.

Its subcellular location is the nucleus. Required for RNA polymerase III-mediated transcription. Component of TFIIIC that initiates transcription complex assembly on tRNA and is required for transcription of 5S rRNA and other stable nuclear and cytoplasmic RNAs. May play a direct role in stabilizing interactions of TFIIIC2 with TFIIIC1. The protein is General transcription factor 3C polypeptide 2 (GTF3C2) of Homo sapiens (Human).